The chain runs to 378 residues: Putative glutamate--cysteine ligase 2 (378 aa).

Belongs to the glutamate--cysteine ligase type 2 family. YbdK subfamily.

The catalysed reaction is L-cysteine + L-glutamate + ATP = gamma-L-glutamyl-L-cysteine + ADP + phosphate + H(+). Functionally, ATP-dependent carboxylate-amine ligase which exhibits weak glutamate--cysteine ligase activity. The chain is Putative glutamate--cysteine ligase 2 from Bdellovibrio bacteriovorus (strain ATCC 15356 / DSM 50701 / NCIMB 9529 / HD100).